Consider the following 241-residue polypeptide: Xyloglucan-specific endo-beta-1,4-glucanase 1 (241 aa).

The first 19 residues, 1 to 19, serve as a signal peptide directing secretion; sequence MKGLLAGTIAAATFAVASA. Glu136 is an active-site residue. Residues Asn174 and Asn190 are each glycosylated (N-linked (GlcNAc...) asparagine). Residue Glu222 is part of the active site.

The protein belongs to the glycosyl hydrolase 12 (cellulase H) family. In terms of assembly, interacts with host apoplastic glucanase inhibitor GIP2.

It carries out the reaction xyloglucan + H2O = xyloglucan oligosaccharides.. Its activity is regulated as follows. The xyloglucanase activity is inhibited by the binding of the host apoplastic glucanase inhibitor GIP2. Glycoside hydrolase that exhibits xyloglucanase activity. Acts as an important virulence factor during P.parasitica infection of its host Nicotiana benthamiana. Also acts as a pathogen-associated molecular pattern (PAMP) in host species, where it can trigger defense responses including cell death. The PAMP activity is independent of its xyloglucanase activity. With paralog XLP1, is required to elevate apoplastic sugar during P.parasitica infection. The sequence is that of Xyloglucan-specific endo-beta-1,4-glucanase 1 from Phytophthora nicotianae (strain INRA-310) (Phytophthora parasitica).